The primary structure comprises 289 residues: ATP synthase gamma chain (289 aa).

The protein belongs to the ATPase gamma chain family. F-type ATPases have 2 components, CF(1) - the catalytic core - and CF(0) - the membrane proton channel. CF(1) has five subunits: alpha(3), beta(3), gamma(1), delta(1), epsilon(1). CF(0) has three main subunits: a, b and c.

It localises to the cell inner membrane. Produces ATP from ADP in the presence of a proton gradient across the membrane. The gamma chain is believed to be important in regulating ATPase activity and the flow of protons through the CF(0) complex. In Phocaeicola vulgatus (strain ATCC 8482 / DSM 1447 / JCM 5826 / CCUG 4940 / NBRC 14291 / NCTC 11154) (Bacteroides vulgatus), this protein is ATP synthase gamma chain.